A 558-amino-acid polypeptide reads, in one-letter code: MEIILFLTMMVMITYVFSGYLYRVALVQSSRVDLIFTRFENMCFKIIGTDLEHMSAKTYVKHFLAFNGFMGFITFVLLIVQQWLFLNPNHNLNQSIDLAFNTAISFLTNSNLQHYNGESDVTYLTQMIVMTYLMFTSSASGYAVCIAMLRRLTGLTNIIGNFYQDIVRFIVRVLLPLSCLISILLMTQGVPQTLHANLMIRTLSGHIQHIAFGPIASLESIKHLGTNGGGFLAGNSATPFENPNIWSNFIEMGSMMLLPMSMLFLFGRMLSRHGKRVHRHALILFVAMFFIFIAILTLTMWSEYRGNPILANLGIYGPNMEGKEVRFGAGLSALFTVITTAFTTGSVNNMHDSLTPIGGLGPMVLMMLNVVFGGEGVGLMNLLIFVLLTVFICSLMVGKTPEYLNMPIGAREMKCIVLVFLIHPILILVFSALAFMIPGASESITNPSFHGISQVMYEMTSAAANNGSGFEGLKDDTTFWNISTGIIMLLSRYIPIILQLMIASSLVNKKSYHQDKYTIAIDKPYFGVSLIVFIVLLSGLTFIPVLLLGPIGEFLTLK.

12 helical membrane-spanning segments follow: residues 1–21 (MEII…SGYL), 66–86 (FNGF…WLFL), 127–147 (MIVM…VCIA), 166–186 (IVRF…ILLM), 245–265 (IWSN…MLFL), 281–301 (ALIL…LTMW), 327–347 (FGAG…TGSV), 354–374 (LTPI…VFGG), 377–397 (VGLM…SLMV), 416–436 (IVLV…LAFM), 482–502 (ISTG…QLMI), and 531–551 (IVFI…LGPI).

This sequence belongs to the KdpA family. The system is composed of three essential subunits: KdpA, KdpB and KdpC.

It localises to the cell membrane. In terms of biological role, part of the high-affinity ATP-driven potassium transport (or Kdp) system, which catalyzes the hydrolysis of ATP coupled with the electrogenic transport of potassium into the cytoplasm. This subunit binds the extracellular potassium ions and delivers the ions to the membrane domain of KdpB through an intramembrane tunnel. This chain is Potassium-transporting ATPase potassium-binding subunit, found in Staphylococcus aureus (strain USA300).